The sequence spans 634 residues: ATP-dependent clpX-like chaperone, mitochondrial (634 aa).

Residues 1-56 constitute a mitochondrion transit peptide; sequence MSSCGACTCGAAAARLLTTSLTSAQRGISCGRIHVPVLGRLGTTLDAQALRRAPLR. Residues 69-102 form a disordered region; sequence DGANKDGSGDGNKKSVTEGSSKKSGSGNSGKGGN. Positions 70-84 are enriched in basic and acidic residues; it reads GANKDGSGDGNKKSV. Residues 85-94 show a composition bias toward low complexity; that stretch reads TEGSSKKSGS. The ClpX-type ZB domain occupies 94–147; sequence SGNSGKGGNQLRCPKCGDLCTHVETFVSSTRFVKCEKCHHFFVVLSEADSKKSI. Positions 106, 109, 128, and 131 each coordinate Zn(2+). 295-302 contributes to the ATP binding site; that stretch reads PTGSGKTL. Residue Lys438 is modified to N6-acetyllysine. The span at 599–611 shows a compositional bias: basic and acidic residues; sequence KEPGYIRAPSKES. The disordered stretch occupies residues 599–634; that stretch reads KEPGYIRAPSKESSEEEYDSGVEEDGWPRQADAANS. The span at 612–623 shows a compositional bias: acidic residues; that stretch reads SEEEYDSGVEED. The residue at position 618 (Ser618) is a Phosphoserine.

The protein belongs to the ClpX chaperone family. Homohexamer that forms a ring structure; this hexamerization requires ATP binding. Component of the ClpXP complex formed by the assembly of two CLPP heptameric rings with two CLPX hexameric rings, giving rise to a symmetrical structure with two central CLPP rings flanked by a CLPX ring at either end of the complex. Interacts with TFAM. In terms of tissue distribution, detected in liver (at protein level).

The protein resides in the mitochondrion. The protein localises to the mitochondrion matrix. Its subcellular location is the mitochondrion nucleoid. It carries out the reaction ATP + H2O = ADP + phosphate + H(+). In terms of biological role, ATP-dependent chaperone that functions as an unfoldase. As part of the ClpXP protease complex, it recognizes specific protein substrates, unfolds them using energy derived from ATP hydrolysis, and then translocates them to the proteolytic subunit (CLPP) of the ClpXP complex for degradation. Thanks to its chaperone activity, it also functions in the incorporation of the pyridoxal phosphate cofactor into 5-aminolevulinate synthase, thereby activating 5-aminolevulinate (ALA) synthesis, the first step in heme biosynthesis. This chaperone is also involved in the control of mtDNA nucleoid distribution, by regulating mitochondrial transcription factor A (TFAM) activity. This chain is ATP-dependent clpX-like chaperone, mitochondrial, found in Mus musculus (Mouse).